We begin with the raw amino-acid sequence, 86 residues long: Small ribosomal subunit protein uS17 (86 aa).

The protein belongs to the universal ribosomal protein uS17 family. Part of the 30S ribosomal subunit.

Its function is as follows. One of the primary rRNA binding proteins, it binds specifically to the 5'-end of 16S ribosomal RNA. This is Small ribosomal subunit protein uS17 from Bifidobacterium longum (strain DJO10A).